The primary structure comprises 384 residues: MKSGRYIGVMSGTSLDGVDVVLAAIDEHMVAQQASLSWPMPPEIKKAILDICQGQPLTLSQLGRLDHQLGCLFADAVNALMEQQKLKPEDVMAIGCHGQTVWHEPTGSAPHTMQIGDNNQIVARTGVSVVGDFRRRDMALGGQGAPLVPAFHQALLAHPTERRMVLNIGGIANLSLLFPGQPVKGFDTGPGNMLMDAWIWRQKGKPFDKDGEWAASGNVVQPLLQKMLRDPYFSTPAPKSTGREYFNYGWIERQLSSFAGLPAQDVQATLLELTASTIARDVQLSGGAERLMICGGGGRNPRLVARLAALLPGTEVSSTDEMGIRGDDMEALAFAWLAYRTLSGKPGNLPSVTGAREASVIGAVFPANPLNNRSLPTFPAPPGR.

Gly12–Asp19 is a binding site for ATP.

It belongs to the anhydro-N-acetylmuramic acid kinase family.

It catalyses the reaction 1,6-anhydro-N-acetyl-beta-muramate + ATP + H2O = N-acetyl-D-muramate 6-phosphate + ADP + H(+). The protein operates within amino-sugar metabolism; 1,6-anhydro-N-acetylmuramate degradation. It participates in cell wall biogenesis; peptidoglycan recycling. Its function is as follows. Catalyzes the specific phosphorylation of 1,6-anhydro-N-acetylmuramic acid (anhMurNAc) with the simultaneous cleavage of the 1,6-anhydro ring, generating MurNAc-6-P. Is required for the utilization of anhMurNAc either imported from the medium or derived from its own cell wall murein, and thus plays a role in cell wall recycling. The sequence is that of Anhydro-N-acetylmuramic acid kinase from Cronobacter sakazakii (strain ATCC BAA-894) (Enterobacter sakazakii).